Here is a 188-residue protein sequence, read N- to C-terminus: Pro-FMRFamide-related neuropeptide VF (188 aa).

Residues 1–26 (MEIISLKRFILLTVATSSFLTSNTFC) form the signal peptide. A propeptide spanning residues 27-57 (TDEFMMPHFHSKEGDGKYSQLRGIPKGEKER) is cleaved from the precursor. F94 carries the post-translational modification Phenylalanine amide. Positions 97–106 (TIDEKRSPAA) are excised as a propeptide. Disordered stretches follow at residues 116 to 144 (SHFP…QKPL) and 163 to 188 (IQSP…KPEK). F125 bears the Phenylalanine amide mark. A propeptide spanning residues 128-188 (TTARSPKTPA…TDDAERKPEK (61 aa)) is cleaved from the precursor.

This sequence belongs to the FARP (FMRFamide related peptide) family.

The protein localises to the secreted. Its function is as follows. Efficiently inhibits forskolin-induced production of cAMP. Acts as a potent negative regulator of gonadotropin synthesis and secretion. Induces secretion of prolactin. In terms of biological role, efficiently inhibits forskolin-induced production of cAMP. Blocks morphine-induced analgesia. The sequence is that of Pro-FMRFamide-related neuropeptide VF (Npvf) from Mus musculus (Mouse).